A 256-amino-acid polypeptide reads, in one-letter code: Small ribosomal subunit protein uS2 (256 aa).

A coiled-coil region spans residues 104–149 (NFKTISQRVHRLEELEALFASPEIEERPKKEQVRLKHELERLQKYL).

Belongs to the universal ribosomal protein uS2 family. Part of the 30S ribosomal subunit. Contacts protein S8.

Functionally, spans the head-body hinge region of the 30S subunit. Is loosely associated with the 30S subunit. This Thermus thermophilus (strain ATCC BAA-163 / DSM 7039 / HB27) protein is Small ribosomal subunit protein uS2 (rpsB).